A 386-amino-acid chain; its full sequence is uncharacterized protein (386 aa).

It belongs to the mimivirus L17x/L18x family.

This is an uncharacterized protein from Acanthamoeba polyphaga mimivirus (APMV).